We begin with the raw amino-acid sequence, 49 residues long: Delta-actitoxin-Axm1h (49 aa).

Disulfide bonds link Cys-4–Cys-46, Cys-6–Cys-36, and Cys-29–Cys-47.

This sequence belongs to the sea anemone sodium channel inhibitory toxin family. Type I subfamily.

Its subcellular location is the secreted. The protein localises to the nematocyst. Functionally, binds specifically to voltage-gated sodium channels (Nav) (site 3), thereby delaying their inactivation during signal transduction. Thus it may strongly stimulate mammalian cardiac muscle contraction. This Anthopleura xanthogrammica (Giant green sea anemone) protein is Delta-actitoxin-Axm1h.